A 211-amino-acid chain; its full sequence is Peptidyl-prolyl cis-trans isomerase FKBP14 (211 aa).

Residues 1 to 19 (MRFFLWNAILALWVTVLSG) form the signal peptide. A disulfide bridge links cysteine 38 with cysteine 96. The region spanning 45–135 (GDLMLVHYEG…IFNIDLLEIR (91 aa)) is the PPIase FKBP-type domain. The EF-hand 1 domain maps to 135 to 170 (RNGPRSHESFQEMDLNDDWRLSKHEVKVYLQKEFEK). Positions 148, 150, 152, 154, and 159 each coordinate Ca(2+). Residue asparagine 176 is glycosylated (N-linked (GlcNAc...) asparagine). An EF-hand 2 domain is found at 179 to 211 (HHDALVEDIFDKEDEDKDGFISAREFTYVHDEL). The Ca(2+) site is built by aspartate 192, aspartate 194, aspartate 196, and glutamate 203. Positions 208–211 (HDEL) match the Prevents secretion from ER motif.

In terms of assembly, monomer. Homodimer. Interacts with type III, type IV and type X collagens.

It localises to the endoplasmic reticulum lumen. It carries out the reaction [protein]-peptidylproline (omega=180) = [protein]-peptidylproline (omega=0). With respect to regulation, inhibited by tacrolimus/FK506. In terms of biological role, PPIase which accelerates the folding of proteins during protein synthesis. Has a preference for substrates containing 4-hydroxylproline modifications, including type III collagen. May also target type VI and type X collagens. This Mus musculus (Mouse) protein is Peptidyl-prolyl cis-trans isomerase FKBP14 (Fkbp14).